The following is a 266-amino-acid chain: Tryptophan synthase alpha chain (266 aa).

Catalysis depends on proton acceptor residues glutamate 50 and aspartate 61.

The protein belongs to the TrpA family. As to quaternary structure, tetramer of two alpha and two beta chains.

It carries out the reaction (1S,2R)-1-C-(indol-3-yl)glycerol 3-phosphate + L-serine = D-glyceraldehyde 3-phosphate + L-tryptophan + H2O. The protein operates within amino-acid biosynthesis; L-tryptophan biosynthesis; L-tryptophan from chorismate: step 5/5. In terms of biological role, the alpha subunit is responsible for the aldol cleavage of indoleglycerol phosphate to indole and glyceraldehyde 3-phosphate. The sequence is that of Tryptophan synthase alpha chain from Alkaliphilus metalliredigens (strain QYMF).